The sequence spans 99 residues: NADH-ubiquinone oxidoreductase chain 2 (99 aa).

Transmembrane regions (helical) follow at residues phenylalanine 22 to isoleucine 42 and valine 65 to isoleucine 85.

It belongs to the complex I subunit 2 family.

The protein localises to the mitochondrion inner membrane. The catalysed reaction is a ubiquinone + NADH + 5 H(+)(in) = a ubiquinol + NAD(+) + 4 H(+)(out). Its function is as follows. Core subunit of the mitochondrial membrane respiratory chain NADH dehydrogenase (Complex I) that is believed to belong to the minimal assembly required for catalysis. Complex I functions in the transfer of electrons from NADH to the respiratory chain. The immediate electron acceptor for the enzyme is believed to be ubiquinone. The sequence is that of NADH-ubiquinone oxidoreductase chain 2 (ND2) from Cyanidium caldarium (Red alga).